The following is a 531-amino-acid chain: MWIVLCAFLALPLFLVTYFELGLLRRKRMLNKFQGPSMLPLVGNAHQMGNTPTEILNRFFGWWHEYGKDNFRYWIGYYSNIMVTNPKYMEFILSSQTLISKSDVYDLTHPWLGLGLLTSTGSKWHKHRKMITPAFHFNILQDFHEVMNENSTKFIDQLKKVADGGNIFDFQEEAHYLTLDVICDTAMGVSINAMENRSSSVVQAFKDITYTIKMRAFSPWKRNKYLFHFAPEYPEYSKTLKTLQDFTNEIIAKRIEVRKSGLEVGIKADEFSRKKMAFLDTLLSSKVDGRPLTSQELYEEVSTFMFEGHDTTTSGVGFAVYLLSRHPDEQEKLFNEQCDVMGASGLGRDATFQEISTMKHLDLFIKEAQRLYPSVPFIGRFTEKDYVIDGDIVPKGTTLNLGLLMLGYNDRVFKDPHKFQPERFDREKPGPFEYVPFSAGPRNCIGQKFALLEIKTVVSKIIRNFEVLPALDELVSKDGYISTTLGLQPAEKKSRDAHNHKYDPILSASMTLKSENGLHLRMKQRLVCDST.

Residues E307 and C444 each coordinate heme.

It belongs to the cytochrome P450 family. Heme serves as cofactor.

It is found in the endoplasmic reticulum membrane. The protein resides in the microsome membrane. May be involved in the metabolism of insect hormones and in the breakdown of synthetic insecticides. The sequence is that of Probable cytochrome P450 4e1 (Cyp4e1) from Drosophila melanogaster (Fruit fly).